A 717-amino-acid polypeptide reads, in one-letter code: Polyribonucleotide nucleotidyltransferase (717 aa).

Mg(2+)-binding residues include Asp488 and Asp494. The 60-residue stretch at 555–614 folds into the KH domain; sequence PRIEVMNIPVDKIREVIGSGGKVIREIVEKTGAKINIEDDGTVKIASSSGKEIEAARKWI. An S1 motif domain is found at 624–692; it reads GQIYEGTVVK…ERGKVRLSMK (69 aa).

Belongs to the polyribonucleotide nucleotidyltransferase family. Requires Mg(2+) as cofactor.

It is found in the cytoplasm. It carries out the reaction RNA(n+1) + phosphate = RNA(n) + a ribonucleoside 5'-diphosphate. Functionally, involved in mRNA degradation. Catalyzes the phosphorolysis of single-stranded polyribonucleotides processively in the 3'- to 5'-direction. This is Polyribonucleotide nucleotidyltransferase from Sinorhizobium fredii (strain NBRC 101917 / NGR234).